The primary structure comprises 458 residues: tRNA modification GTPase MnmE (458 aa).

3 residues coordinate (6S)-5-formyl-5,6,7,8-tetrahydrofolate: Arg26, Glu88, and Arg127. Residues Gly224–Phe378 enclose the TrmE-type G domain. Asn234 contacts K(+). GTP contacts are provided by residues Asn234–Ser239, Thr253–Thr259, and Asp278–Gly281. Ser238 is a binding site for Mg(2+). K(+) contacts are provided by Thr253, Ile255, and Thr258. Thr259 is a Mg(2+) binding site. Lys458 serves as a coordination point for (6S)-5-formyl-5,6,7,8-tetrahydrofolate.

This sequence belongs to the TRAFAC class TrmE-Era-EngA-EngB-Septin-like GTPase superfamily. TrmE GTPase family. In terms of assembly, homodimer. Heterotetramer of two MnmE and two MnmG subunits. It depends on K(+) as a cofactor.

The protein resides in the cytoplasm. Its function is as follows. Exhibits a very high intrinsic GTPase hydrolysis rate. Involved in the addition of a carboxymethylaminomethyl (cmnm) group at the wobble position (U34) of certain tRNAs, forming tRNA-cmnm(5)s(2)U34. In Streptococcus pyogenes serotype M6 (strain ATCC BAA-946 / MGAS10394), this protein is tRNA modification GTPase MnmE.